A 155-amino-acid chain; its full sequence is Transcriptional repressor NrdR (155 aa).

Residues 3–34 (CPFCGHSNTQVLDTRMSEDGDAVRRRRRCEAC) fold into a zinc finger. An ATP-cone domain is found at 49 to 139 (PAIVKKNGSR…VYRSFEDVSE (91 aa)).

This sequence belongs to the NrdR family. Zn(2+) serves as cofactor.

Negatively regulates transcription of bacterial ribonucleotide reductase nrd genes and operons by binding to NrdR-boxes. This chain is Transcriptional repressor NrdR, found in Cupriavidus necator (strain ATCC 17699 / DSM 428 / KCTC 22496 / NCIMB 10442 / H16 / Stanier 337) (Ralstonia eutropha).